Consider the following 1161-residue polypeptide: Lysine-specific demethylase 2A (1161 aa).

S28 carries the phosphoserine modification. Residues 148 to 316 (FSHTRLENMV…MQLKIYSIED (169 aa)) form the JmjC domain. Residue T209 coordinates substrate. Fe cation is bound by residues H212 and D214. K229 serves as a coordination point for substrate. H284 contributes to the Fe cation binding site. 2 positions are modified to phosphoserine: S390 and S394. A compositionally biased stretch (low complexity) spans 419 to 433 (KTLSGDSSSDSTRGS). The tract at residues 419–445 (KTLSGDSSSDSTRGSHNGQVWDPQCSP) is disordered. Position 444 is a phosphoserine (S444). A Glycyl lysine isopeptide (Lys-Gly) (interchain with G-Cter in SUMO2) cross-link involves residue K505. The disordered stretch occupies residues 532-557 (VPTIPITKPHTMKPAPRLTPVRPAAA). T550 carries the post-translational modification Phosphothreonine. S558 bears the Phosphoserine mark. The CXXC-type zinc-finger motif lies at 564-610 (ARRRRVRCRKCKACVQGECGVCHYCRDMKKFGGPGRMKQSCVLRQCL). Positions 571, 574, 577, 582, 585, 588, 604, 609, 620, and 623 each coordinate Zn(2+). Residues 617 to 678 (SVTCSLCGEV…CWECPKCYQE (62 aa)) form a PHD-type zinc finger. T632 carries the phosphothreonine modification. 6 residues coordinate Zn(2+): C642, C645, H650, C653, C672, and C675. S692 carries the post-translational modification Phosphoserine. The tract at residues 705–789 (LRSCEEPLTP…PSGKKELSEV (85 aa)) is disordered. At T713 the chain carries Phosphothreonine. Phosphoserine is present on residues S718 and S731. 2 stretches are compositionally biased toward basic and acidic residues: residues 746–757 (SDHHSASRDERF) and 771–789 (TMVR…LSEV). Phosphoserine occurs at positions 825, 868, and 882. The segment at 840-886 (CPARNPQHGDEEGLGGEEEEEEEEEEDDSAEEGGAARLNGRGSWAQD) is disordered. Over residues 851–870 (EGLGGEEEEEEEEEEDDSAE) the composition is skewed to acidic residues. Residues 888-935 (DESWMQREVWMSVFRYLSRKELCECMRVCKTWYKWCCDKRLWTKIDLS) enclose the F-box domain. LRR repeat units follow at residues 960–981 (WTNI…LKDL) and 983–1009 (LAGC…DLRW). The residue at position 1019 (R1019) is an ADP-ribosylarginine. LRR repeat units follow at residues 1047–1072 (GLDI…DLSH), 1073–1102 (CSHL…NMAG), 1103–1127 (CNKL…DLRG), and 1128–1155 (CKQI…SDEK).

Belongs to the JHDM1 histone demethylase family. In terms of assembly, part of a SCF (SKP1-cullin-F-box) protein ligase complex. Interacts with CBX5/HP1A; the interaction promotes CBX5 localization to chromatin. The SKP1-KDM2A complex interacts with UBB. Requires Fe(2+) as cofactor. In terms of processing, mono-ADP-ribosylated at Arg-1019 in response to DNA damage, leading to displacement from chromatin, resulting in increased dimethylation of histone H3 at 'Lys-36'.

It localises to the nucleus. Its subcellular location is the nucleoplasm. It is found in the chromosome. The enzyme catalyses N(6),N(6)-dimethyl-L-lysyl(36)-[histone H3] + 2 2-oxoglutarate + 2 O2 = L-lysyl(36)-[histone H3] + 2 formaldehyde + 2 succinate + 2 CO2. Functionally, histone demethylase that specifically demethylates 'Lys-36' of histone H3, thereby playing a central role in histone code. Preferentially demethylates dimethylated H3 'Lys-36' residue while it has weak or no activity for mono- and tri-methylated H3 'Lys-36'. May also recognize and bind to some phosphorylated proteins and promote their ubiquitination and degradation. Required to maintain the heterochromatic state. Associates with centromeres and represses transcription of small non-coding RNAs that are encoded by the clusters of satellite repeats at the centromere. Required to sustain centromeric integrity and genomic stability, particularly during mitosis. Regulates circadian gene expression by repressing the transcriptional activator activity of CLOCK-BMAL1 heterodimer and RORA in a catalytically-independent manner. In Mus musculus (Mouse), this protein is Lysine-specific demethylase 2A (Kdm2a).